Reading from the N-terminus, the 547-residue chain is CTP synthase (547 aa).

The segment at 1–265 (MARYVFITGG…DQAVLDAFGI (265 aa)) is amidoligase domain. Serine 13 contacts CTP. Serine 13 lines the UTP pocket. Residues 14–19 (SLGKGL) and aspartate 71 each bind ATP. Mg(2+) is bound by residues aspartate 71 and glutamate 139. Residues 146 to 148 (DIE), 186 to 191 (KTKPTQ), and lysine 222 each bind CTP. UTP contacts are provided by residues 186–191 (KTKPTQ) and lysine 222. The Glutamine amidotransferase type-1 domain maps to 291 to 546 (RVAIVGKYTQ…VRAAVEVSRL (256 aa)). Glycine 353 contributes to the L-glutamine binding site. The active-site Nucleophile; for glutamine hydrolysis is the cysteine 380. Residues 381–384 (LGMQ), glutamate 404, and arginine 474 each bind L-glutamine. Active-site residues include histidine 519 and glutamate 521.

Belongs to the CTP synthase family. As to quaternary structure, homotetramer.

The enzyme catalyses UTP + L-glutamine + ATP + H2O = CTP + L-glutamate + ADP + phosphate + 2 H(+). It carries out the reaction L-glutamine + H2O = L-glutamate + NH4(+). The catalysed reaction is UTP + NH4(+) + ATP = CTP + ADP + phosphate + 2 H(+). It functions in the pathway pyrimidine metabolism; CTP biosynthesis via de novo pathway; CTP from UDP: step 2/2. With respect to regulation, allosterically activated by GTP, when glutamine is the substrate; GTP has no effect on the reaction when ammonia is the substrate. The allosteric effector GTP functions by stabilizing the protein conformation that binds the tetrahedral intermediate(s) formed during glutamine hydrolysis. Inhibited by the product CTP, via allosteric rather than competitive inhibition. Its function is as follows. Catalyzes the ATP-dependent amination of UTP to CTP with either L-glutamine or ammonia as the source of nitrogen. Regulates intracellular CTP levels through interactions with the four ribonucleotide triphosphates. The protein is CTP synthase of Cereibacter sphaeroides (strain ATCC 17029 / ATH 2.4.9) (Rhodobacter sphaeroides).